Consider the following 702-residue polypeptide: Methionine--tRNA ligase (702 aa).

The 'HIGH' region signature appears at 14 to 24; sequence PYANGPVHLGH. Residues Cys146, Cys149, Cys159, and Cys162 each coordinate Zn(2+). The short motif at 344–348 is the 'KMSKS' region element; that stretch reads KFSKS. Lys347 is a binding site for ATP. Residues 601–702 enclose the tRNA-binding domain; sequence EFLKVDLRVA…GKEINGKKIQ (102 aa).

Belongs to the class-I aminoacyl-tRNA synthetase family. MetG type 1 subfamily. As to quaternary structure, homodimer. Zn(2+) serves as cofactor.

The protein resides in the cytoplasm. The catalysed reaction is tRNA(Met) + L-methionine + ATP = L-methionyl-tRNA(Met) + AMP + diphosphate. In terms of biological role, is required not only for elongation of protein synthesis but also for the initiation of all mRNA translation through initiator tRNA(fMet) aminoacylation. The protein is Methionine--tRNA ligase of Chlorobium phaeobacteroides (strain DSM 266 / SMG 266 / 2430).